The following is a 500-amino-acid chain: Protein adenylyltransferase Fic (500 aa).

The chain crosses the membrane as a helical span at residues 39-59; sequence LSFLIFFVIGSLFSGLMFALL. 2 TPR repeats span residues 122–155 and 156–190; these read ALSS…SPRH and PEIL…NPSH. Residues 247–252 carry the Inhibitory (S/T)XXXE(G/N) motif motif; sequence SVGIEG. ATP is bound by residues Glu251 and 333–336; that span reads VGGH. A Fido domain is found at 302-437; sequence ITLKDLLEIH…IRPFVRFIAD (136 aa). His380 is a catalytic residue. ATP is bound by residues 384 to 391, 416 to 417, and Asn424; these read DGNGRTSR and YY. The segment at 477–500 is disordered; that stretch reads GREGGSTVHEGSGTGDSIRIGTMW.

It belongs to the fic family. In terms of assembly, homodimer.

Its subcellular location is the membrane. The catalysed reaction is L-tyrosyl-[protein] + ATP = O-(5'-adenylyl)-L-tyrosyl-[protein] + diphosphate. The enzyme catalyses L-threonyl-[protein] + ATP = 3-O-(5'-adenylyl)-L-threonyl-[protein] + diphosphate. It catalyses the reaction 3-O-(5'-adenylyl)-L-threonyl-[protein] + H2O = L-threonyl-[protein] + AMP + H(+). The side chain of Glu-251 determines which of the two opposing activities (AMPylase or de-AMPylase) will take place. In response to endoplasmic reticulum stress, mediates de-AMPylase activity. Adenylyltransferase activity is inhibited by the inhibitory helix present at the N-terminus: Glu-251 binds ATP and competes with ATP-binding at Arg-391, thereby preventing adenylyltransferase activity. In unstressed cells, disengagement of Glu-251 promotes adenylyltransferase activity. Activation dissociates ATP-binding from Glu-251, allowing ordered binding of the entire ATP moiety with the alpha-phosphate in an orientation that is productive for accepting an incoming target hydroxyl side chain. Protein that can both mediate the addition of adenosine 5'-monophosphate (AMP) to specific residues of target proteins (AMPylation), and the removal of the same modification from target proteins (de-AMPylation), depending on the context. The side chain of Glu-251 determines which of the two opposing activities (AMPylase or de-AMPylase) will take place. Acts as a key regulator of the unfolded protein response (UPR) by mediating AMPylation or de-AMPylation of Hsc70-3/BiP. In unstressed cells, acts as an adenylyltransferase by mediating AMPylation of Hsc70-3/BiP at 'Thr-518', thereby inactivating it. In response to endoplasmic reticulum stress, acts as a phosphodiesterase by mediating removal of ATP (de-AMPylation) from Hsc70-3/BiP at 'Thr-518', leading to restore HSPA5/BiP activity. This chain is Protein adenylyltransferase Fic, found in Culex quinquefasciatus (Southern house mosquito).